The primary structure comprises 415 residues: Methylthioribose-1-phosphate isomerase (415 aa).

Asp284 acts as the Proton donor in catalysis.

Belongs to the eIF-2B alpha/beta/delta subunits family. MtnA subfamily.

It is found in the cytoplasm. It localises to the nucleus. It catalyses the reaction 5-(methylsulfanyl)-alpha-D-ribose 1-phosphate = 5-(methylsulfanyl)-D-ribulose 1-phosphate. It participates in amino-acid biosynthesis; L-methionine biosynthesis via salvage pathway; L-methionine from S-methyl-5-thio-alpha-D-ribose 1-phosphate: step 1/6. Its function is as follows. Catalyzes the interconversion of methylthioribose-1-phosphate (MTR-1-P) into methylthioribulose-1-phosphate (MTRu-1-P). The chain is Methylthioribose-1-phosphate isomerase from Candida glabrata (strain ATCC 2001 / BCRC 20586 / JCM 3761 / NBRC 0622 / NRRL Y-65 / CBS 138) (Yeast).